Reading from the N-terminus, the 504-residue chain is Lysine--tRNA ligase (504 aa).

The 'HIGH' region signature appears at 23–31; the sequence is PSGPIHIGN.

This sequence belongs to the class-I aminoacyl-tRNA synthetase family.

The protein resides in the cytoplasm. The enzyme catalyses tRNA(Lys) + L-lysine + ATP = L-lysyl-tRNA(Lys) + AMP + diphosphate. The polypeptide is Lysine--tRNA ligase (Picrophilus torridus (strain ATCC 700027 / DSM 9790 / JCM 10055 / NBRC 100828 / KAW 2/3)).